We begin with the raw amino-acid sequence, 217 residues long: Large ribosomal subunit protein uL3 (217 aa).

It belongs to the universal ribosomal protein uL3 family. Part of the 50S ribosomal subunit. Forms a cluster with proteins L14 and L19.

Functionally, one of the primary rRNA binding proteins, it binds directly near the 3'-end of the 23S rRNA, where it nucleates assembly of the 50S subunit. In Mycobacterium bovis (strain ATCC BAA-935 / AF2122/97), this protein is Large ribosomal subunit protein uL3.